The following is a 276-amino-acid chain: Rhomboid protease GlpG (276 aa).

The next 6 membrane-spanning stretches (helical) occupy residues 94-114, 142-162, 169-189, 192-212, 229-249, and 250-270; these read GPVTWVVMIACVVVFIAMQIL, ALMHFSLMHILFNLLWWWYLG, LGSGKLIVITLISALLSGYVQ, FSGPWFGGLSGVVYALMGYVW, LIIFALIWIVAGWFDLFGMSM, and ANGAHIAGLAVGLAMAFVDSL. Residue S201 is the Nucleophile of the active site. Residue H254 is part of the active site.

Belongs to the peptidase S54 family.

Its subcellular location is the cell inner membrane. It carries out the reaction Cleaves type-1 transmembrane domains using a catalytic dyad composed of serine and histidine that are contributed by different transmembrane domains.. In terms of biological role, rhomboid-type serine protease that catalyzes intramembrane proteolysis. The polypeptide is Rhomboid protease GlpG (Escherichia coli (strain 55989 / EAEC)).